Consider the following 89-residue polypeptide: Small ribosomal subunit protein uS19 (89 aa).

Belongs to the universal ribosomal protein uS19 family.

Protein S19 forms a complex with S13 that binds strongly to the 16S ribosomal RNA. This Xylella fastidiosa (strain M23) protein is Small ribosomal subunit protein uS19.